Here is a 348-residue protein sequence, read N- to C-terminus: Phosphatidylinositol 3,4,5-trisphosphate 3-phosphatase ptn1 (348 aa).

The Phosphatase tensin-type domain occupies 18–189 (EKVNRSFAYL…YYIEILKQFP (172 aa)). The active-site Phosphocysteine intermediate is the Cys-129.

Its subcellular location is the cytoplasmic vesicle. The enzyme catalyses a 1,2-diacyl-sn-glycero-3-phospho-(1D-myo-inositol-3,4,5-trisphosphate) + H2O = a 1,2-diacyl-sn-glycero-3-phospho-(1D-myo-inositol-4,5-bisphosphate) + phosphate. It catalyses the reaction 1,2-dioctanoyl-sn-glycero-3-phospho-(1D-myo-inositol-3,4,5-trisphosphate) + H2O = 1,2-dioctanoyl-sn-glycero-3-phospho-(1D-myo-inositol-4,5-bisphosphate) + phosphate. The catalysed reaction is 1,2-dihexadecanoyl-sn-glycero-3-phospho-(1D-myo-inositol-3,4,5-trisphosphate) + H2O = 1,2-dihexadecanoyl-sn-glycero-3-phospho-(1D-myo-inositol-4,5-bisphosphate) + phosphate. Functionally, acts as a phosphoinositide 3-phosphatase and regulates PtdIns(3,4,5)P3 levels. The chain is Phosphatidylinositol 3,4,5-trisphosphate 3-phosphatase ptn1 (ptn1) from Schizosaccharomyces pombe (strain 972 / ATCC 24843) (Fission yeast).